The primary structure comprises 232 residues: Large ribosomal subunit protein uL1 (232 aa).

It belongs to the universal ribosomal protein uL1 family. Part of the 50S ribosomal subunit.

In terms of biological role, binds directly to 23S rRNA. The L1 stalk is quite mobile in the ribosome, and is involved in E site tRNA release. Its function is as follows. Protein L1 is also a translational repressor protein, it controls the translation of the L11 operon by binding to its mRNA. This Cereibacter sphaeroides (strain ATCC 17025 / ATH 2.4.3) (Rhodobacter sphaeroides) protein is Large ribosomal subunit protein uL1.